Reading from the N-terminus, the 380-residue chain is Outer membrane protein assembly factor BamB (380 aa).

Positions 1 to 18 (MVQWKHAALLALALAVVG) are cleaved as a signal peptide. Residue Cys-19 is the site of N-palmitoyl cysteine attachment. A lipid anchor (S-diacylglycerol cysteine) is attached at Cys-19.

It belongs to the BamB family. In terms of assembly, part of the Bam complex.

Its subcellular location is the cell outer membrane. Functionally, part of the outer membrane protein assembly complex, which is involved in assembly and insertion of beta-barrel proteins into the outer membrane. The sequence is that of Outer membrane protein assembly factor BamB from Pseudomonas aeruginosa (strain ATCC 15692 / DSM 22644 / CIP 104116 / JCM 14847 / LMG 12228 / 1C / PRS 101 / PAO1).